The following is a 1071-amino-acid chain: ATP-dependent helicase/deoxyribonuclease subunit B (1071 aa).

Belongs to the helicase family. AddB/RexB type 2 subfamily. Heterodimer of AddA and RexB. Mg(2+) is required as a cofactor.

The heterodimer acts as both an ATP-dependent DNA helicase and an ATP-dependent, dual-direction single-stranded exonuclease. Recognizes the chi site generating a DNA molecule suitable for the initiation of homologous recombination. This subunit has 5' -&gt; 3' nuclease activity but not helicase activity. This chain is ATP-dependent helicase/deoxyribonuclease subunit B, found in Streptococcus pyogenes serotype M49 (strain NZ131).